Here is a 113-residue protein sequence, read N- to C-terminus: Large ribosomal subunit protein uL22 (113 aa).

Belongs to the universal ribosomal protein uL22 family. As to quaternary structure, part of the 50S ribosomal subunit.

In terms of biological role, this protein binds specifically to 23S rRNA; its binding is stimulated by other ribosomal proteins, e.g. L4, L17, and L20. It is important during the early stages of 50S assembly. It makes multiple contacts with different domains of the 23S rRNA in the assembled 50S subunit and ribosome. Its function is as follows. The globular domain of the protein is located near the polypeptide exit tunnel on the outside of the subunit, while an extended beta-hairpin is found that lines the wall of the exit tunnel in the center of the 70S ribosome. The sequence is that of Large ribosomal subunit protein uL22 from Bacillus subtilis (strain 168).